Here is a 113-residue protein sequence, read N- to C-terminus: Large ribosomal subunit protein bL19 (113 aa).

Belongs to the bacterial ribosomal protein bL19 family.

This protein is located at the 30S-50S ribosomal subunit interface and may play a role in the structure and function of the aminoacyl-tRNA binding site. This is Large ribosomal subunit protein bL19 from Rhodococcus erythropolis (strain PR4 / NBRC 100887).